The chain runs to 637 residues: tRNA 5-methylaminomethyl-2-thiouridine biosynthesis bifunctional protein MnmC (637 aa).

The segment at 1 to 20 (MSERIEWLEDGTAGGSPYSP) is disordered. Positions 1–232 (MSERIEWLED…KRDNLQGEYQ (232 aa)) are tRNA (mnm(5)s(2)U34)-methyltransferase. Positions 255-637 (IGAGLAGSAV…YATRLQPSGS (383 aa)) are FAD-dependent cmnm(5)s(2)U34 oxidoreductase.

The protein in the N-terminal section; belongs to the methyltransferase superfamily. tRNA (mnm(5)s(2)U34)-methyltransferase family. This sequence in the C-terminal section; belongs to the DAO family. It depends on FAD as a cofactor.

It localises to the cytoplasm. It catalyses the reaction 5-aminomethyl-2-thiouridine(34) in tRNA + S-adenosyl-L-methionine = 5-methylaminomethyl-2-thiouridine(34) in tRNA + S-adenosyl-L-homocysteine + H(+). Its function is as follows. Catalyzes the last two steps in the biosynthesis of 5-methylaminomethyl-2-thiouridine (mnm(5)s(2)U) at the wobble position (U34) in tRNA. Catalyzes the FAD-dependent demodification of cmnm(5)s(2)U34 to nm(5)s(2)U34, followed by the transfer of a methyl group from S-adenosyl-L-methionine to nm(5)s(2)U34, to form mnm(5)s(2)U34. The polypeptide is tRNA 5-methylaminomethyl-2-thiouridine biosynthesis bifunctional protein MnmC (Polaromonas naphthalenivorans (strain CJ2)).